The sequence spans 1914 residues: Zinc finger protein Rlf (1914 aa).

Ser41 bears the Phosphoserine mark. Basic and acidic residues predominate over residues 521-540 (KQYRRRDLTDQHKEKRDKKP). Residues 521–541 (KQYRRRDLTDQHKEKRDKKPI) are disordered. The segment at 582-604 (YTCPVCIKKFKRKEMFVPHVMEH) adopts a C2H2-type 1 zinc-finger fold. A Glycyl lysine isopeptide (Lys-Gly) (interchain with G-Cter in SUMO2) cross-link involves residue Lys622. Ser632 and Ser634 each carry phosphoserine. C2H2-type zinc fingers lie at residues 671–696 (YPCP…KAEH), 714–736 (EKCT…EQVH), 742–766 (YMCV…KQKH), 771–795 (YKCE…EAQH), and 801–825 (YTCN…LSMH). Lys839 is covalently cross-linked (Glycyl lysine isopeptide (Lys-Gly) (interchain with G-Cter in SUMO2)). The tract at residues 882–907 (TETAENLKENSDSNSSDQLSHSSSAS) is disordered. Positions 893–907 (DSNSSDQLSHSSSAS) are enriched in low complexity. Residues 954–979 (FTCGFDGCGSTYKNARGMQKHLRKVH) form a C2H2-type 7 zinc finger. A disordered region spans residues 993-1028 (LFPSLGNEHNQTTEKLDAEPKPCSDTNSDSPDEGLD). Residues 1003-1014 (QTTEKLDAEPKP) show a composition bias toward basic and acidic residues. C2H2-type zinc fingers lie at residues 1127 to 1152 (FFCE…LKKH) and 1172 to 1195 (FQCH…KNKH). The interval 1231–1290 (LGGDPSSNSEKPHCHPKKDECSSETDLESSCEETESKTSDISSPIGSHREEQEGREGRGS) is disordered. Basic and acidic residues predominate over residues 1240–1251 (EKPHCHPKKDEC). Residues 1252–1263 (SSETDLESSCEE) are compositionally biased toward acidic residues. The span at 1277-1289 (SHREEQEGREGRG) shows a compositional bias: basic and acidic residues. 5 C2H2-type zinc fingers span residues 1310 to 1335 (FHCI…RTVH), 1362 to 1387 (FACK…SDSH), 1407 to 1432 (FSCN…MEQH), 1444 to 1469 (IHCD…YYRH), and 1549 to 1574 (YPCM…KRTH). A Glycyl lysine isopeptide (Lys-Gly) (interchain with G-Cter in SUMO2) cross-link involves residue Lys1423. Residues Lys1599 and Lys1611 each participate in a glycyl lysine isopeptide (Lys-Gly) (interchain with G-Cter in SUMO2) cross-link. Residues 1620–1654 (SERTEHSHSPGDSSAPIQNTDCCHSSERDGGQKGC) form a disordered region. Residues 1629–1642 (PGDSSAPIQNTDCC) are compositionally biased toward polar residues. Residue Lys1696 forms a Glycyl lysine isopeptide (Lys-Gly) (interchain with G-Cter in SUMO2) linkage. Positions 1725-1757 (ESETRQHSSGQENTVKNPTHVPKENFRKHSQPR) are disordered. A compositionally biased stretch (polar residues) spans 1731 to 1741 (HSSGQENTVKN). A Glycyl lysine isopeptide (Lys-Gly) (interchain with G-Cter in SUMO2) cross-link involves residue Lys1762. Residues 1783–1807 (KEDDFDDWEPSEHLTLSNSSQSSND) are disordered. The span at 1796–1807 (LTLSNSSQSSND) shows a compositional bias: polar residues.

This sequence belongs to the krueppel C2H2-type zinc-finger protein family. As to quaternary structure, interacts with RIT1 and RIT2. In terms of tissue distribution, widely expressed in fetal and adult tissues.

The protein localises to the nucleus. May be involved in transcriptional regulation. The protein is Zinc finger protein Rlf (RLF) of Homo sapiens (Human).